The primary structure comprises 689 residues: UvrABC system protein C (689 aa).

Residues 1 to 19 show a composition bias toward polar residues; that stretch reads MTSDSSDTAKQIGSGQPSG. The segment at 1–59 is disordered; the sequence is MTSDSSDTAKQIGSGQPSGSPADMRRRDGVAPEQEVDPASLETDEDDEARLPDLPDEPV. Residues 42–59 are compositionally biased toward acidic residues; the sequence is ETDEDDEARLPDLPDEPV. A GIY-YIG domain is found at 83–161; it reads TSPGVYRMMN…IKQLRPRFNV (79 aa). In terms of domain architecture, UVR spans 271 to 306; that stretch reads RAVKEDLARAMEQAAADLAFERAALYRDRLAALSAI.

Belongs to the UvrC family. Interacts with UvrB in an incision complex.

It is found in the cytoplasm. In terms of biological role, the UvrABC repair system catalyzes the recognition and processing of DNA lesions. UvrC both incises the 5' and 3' sides of the lesion. The N-terminal half is responsible for the 3' incision and the C-terminal half is responsible for the 5' incision. In Nitrobacter winogradskyi (strain ATCC 25391 / DSM 10237 / CIP 104748 / NCIMB 11846 / Nb-255), this protein is UvrABC system protein C.